A 138-amino-acid polypeptide reads, in one-letter code: Basic phospholipase A2 trimucrotoxin (138 aa).

An N-terminal signal peptide occupies residues 1–16; it reads MRTLWIVAVLLLGVEG. Cystine bridges form between Cys-42/Cys-131, Cys-44/Cys-60, Cys-59/Cys-111, Cys-65/Cys-138, Cys-66/Cys-104, Cys-73/Cys-97, and Cys-91/Cys-102. Ca(2+) contacts are provided by Tyr-43, Gly-45, and Gly-47. His-63 is an active-site residue. A Ca(2+)-binding site is contributed by Asp-64. Residue Asp-105 is part of the active site.

This sequence belongs to the phospholipase A2 family. Group II subfamily. D49 sub-subfamily. In terms of assembly, homodimer. Ca(2+) serves as cofactor. As to expression, expressed by the venom gland.

The protein localises to the secreted. The catalysed reaction is a 1,2-diacyl-sn-glycero-3-phosphocholine + H2O = a 1-acyl-sn-glycero-3-phosphocholine + a fatty acid + H(+). Snake venom phospholipase A2 (PLA2) that displays edema-inducing activities, as well as presynaptic neurotoxicity and low myotoxicity. PLA2 catalyzes the calcium-dependent hydrolysis of the 2-acyl groups in 3-sn-phosphoglycerides. This chain is Basic phospholipase A2 trimucrotoxin, found in Protobothrops mucrosquamatus (Taiwan habu).